Reading from the N-terminus, the 144-residue chain is MHLNTLAPAPGAKKSSKRVGRGMGSGLGKTGGRGHKGQKSRSGGSVKPGFEGGQMPIQRRLPKFGFTSRKSLVSDQVTLSEIAKVEGEVVSLETLKAAGLVKKEMLFVKVLKSGEISRAVTINGLKVTKGAREAIEAAGGKVEE.

The interval 1-59 is disordered; that stretch reads MHLNTLAPAPGAKKSSKRVGRGMGSGLGKTGGRGHKGQKSRSGGSVKPGFEGGQMPIQR. Residues 21-31 are compositionally biased toward gly residues; the sequence is RGMGSGLGKTG.

It belongs to the universal ribosomal protein uL15 family. In terms of assembly, part of the 50S ribosomal subunit.

Functionally, binds to the 23S rRNA. This Pseudoalteromonas atlantica (strain T6c / ATCC BAA-1087) protein is Large ribosomal subunit protein uL15.